The following is a 235-amino-acid chain: MGQKVHPHGIRLGIVKPWSSTWFANTQDFADNLEGDFKVRQFLNKELANASVSRITIERPAKSIRVTIHTARPGIVIGKKGEDVEKLRNAVAKIAGVPAQINIAEVKKPELDAKLVADSIASQLERRVMFRRAMKKAVQNAMRLGAKGIKVEVSGRLGGAEIARSEWYREGRVPLHTLRADIDYNTAEAHTTYGVIGVKVWIFKGEILGGMAALAQPEQQPTDKPKKVPRGKGRK.

One can recognise a KH type-2 domain in the interval 39-107 (VRQFLNKELA…PAQINIAEVK (69 aa)). The tract at residues 216–235 (QPEQQPTDKPKKVPRGKGRK) is disordered.

It belongs to the universal ribosomal protein uS3 family. As to quaternary structure, part of the 30S ribosomal subunit. Forms a tight complex with proteins S10 and S14.

Functionally, binds the lower part of the 30S subunit head. Binds mRNA in the 70S ribosome, positioning it for translation. The sequence is that of Small ribosomal subunit protein uS3 from Aggregatibacter actinomycetemcomitans (Actinobacillus actinomycetemcomitans).